The sequence spans 364 residues: UDP-3-O-acylglucosamine N-acyltransferase (364 aa).

The active-site Proton acceptor is His258.

The protein belongs to the transferase hexapeptide repeat family. LpxD subfamily. As to quaternary structure, homotrimer.

The catalysed reaction is a UDP-3-O-[(3R)-3-hydroxyacyl]-alpha-D-glucosamine + a (3R)-hydroxyacyl-[ACP] = a UDP-2-N,3-O-bis[(3R)-3-hydroxyacyl]-alpha-D-glucosamine + holo-[ACP] + H(+). It functions in the pathway bacterial outer membrane biogenesis; LPS lipid A biosynthesis. Catalyzes the N-acylation of UDP-3-O-acylglucosamine using 3-hydroxyacyl-ACP as the acyl donor. Is involved in the biosynthesis of lipid A, a phosphorylated glycolipid that anchors the lipopolysaccharide to the outer membrane of the cell. In Burkholderia orbicola (strain MC0-3), this protein is UDP-3-O-acylglucosamine N-acyltransferase.